The chain runs to 323 residues: MTNFKWIVAAAGLLFGQVLAAPTATSTHAKRATVSDAAFGYASLNGGTTGGAGGTTTTVSSYAAFTSAVSGDDAKVVYVDGTIKQTADQVKIGSNTSIIGKDANAILEGFGVLVKEKENVIIRNLGVSKVLADNGDAIGVQYSNNVWIDHCDVSSDRDHDKDYYDGLIDITHGSDYVTVSNTFIHDHWKASLVGHSDSNEDEDSGHLTVTYANNYWYNVNSRAPSFRFGTGHVYNSYYLDVSDGINTRDGAQLLVESNQFVDSKKALYSTDDGYAVSNDNDFGDSENTAEEGTLTSMPYDYTLLGSANVKAAVVGTAGQTLTF.

The N-terminal stretch at 1-31 (MTNFKWIVAAAGLLFGQVLAAPTATSTHAKR) is a signal peptide. An N-linked (GlcNAc...) asparagine glycan is attached at Asn95. Ca(2+) is bound by residues Asp136, Asp165, and Asp169. Residue Arg222 is part of the active site.

The protein belongs to the polysaccharide lyase 1 family. Ca(2+) is required as a cofactor.

The protein localises to the secreted. It carries out the reaction Eliminative cleavage of (1-&gt;4)-alpha-D-galacturonan to give oligosaccharides with 4-deoxy-alpha-D-galact-4-enuronosyl groups at their non-reducing ends.. Its function is as follows. Pectinolytic enzyme consist of four classes of enzymes: pectin lyase, polygalacturonase, pectin methylesterase and rhamnogalacturonase. Among pectinolytic enzymes, pectin lyase is the most important in depolymerization of pectin, since it cleaves internal glycosidic bonds of highly methylated pectins. Favors pectate, the anion, over pectin, the methyl ester. This Aspergillus niger protein is Pectate lyase A (plyA).